Here is a 294-residue protein sequence, read N- to C-terminus: Metallophosphoesterase MPPED2 (294 aa).

Residues aspartate 65, histidine 67, aspartate 86, asparagine 117, and histidine 213 each coordinate Mn(2+). Residue 117 to 118 coordinates GMP; the sequence is NH. GMP is bound by residues 225-226 and 252-255; these read KE and GIHE. Histidine 254 provides a ligand contact to Mn(2+).

It belongs to the UPF0046 family. As to quaternary structure, homodimer. The cofactor is Mn(2+). Requires Co(2+) as cofactor.

Its activity is regulated as follows. Inhibited by nmolar levels of AMP and GMP. Displays low metallophosphoesterase activity (in vitro). May play a role in the development of the nervous system. This Mus musculus (Mouse) protein is Metallophosphoesterase MPPED2 (Mpped2).